The sequence spans 131 residues: MSWQTYVDEHLMCEIDGQHLTAAAIIGHEGGIWAQSDSFPQVKPEQTAAIMRDFAEPGSLAPTGLFLGDGKYMVIQGEPGAVIRGKKGSGGVTIKKTNMALIVGIYDEPMTPGQCNMVVERLGDYLYDQGF.

Belongs to the profilin family. As to quaternary structure, occurs in many kinds of cells as a complex with monomeric actin in a 1:1 ratio.

It is found in the cytoplasm. The protein localises to the cytoskeleton. Functionally, binds to actin and affects the structure of the cytoskeleton. At high concentrations, profilin prevents the polymerization of actin, whereas it enhances it at low concentrations. By binding to PIP2, it inhibits the formation of IP3 and DG. In Lilium longiflorum (Trumpet lily), this protein is Profilin-3.